Consider the following 4239-residue polypeptide: Tenellin synthetase (4239 aa).

The region spanning 15 to 454 (SEPIAIIGSA…GTNAHAIIER (440 aa)) is the Ketosynthase family 3 (KS3) domain. Active-site for beta-ketoacyl synthase activity residues include cysteine 189, histidine 326, and histidine 374. The malonyl-CoA:ACP transacylase (MAT) domain stretch occupies residues 589–923 (VFTGQGAQWP…ANDAVAFSTA (335 aa)). The tract at residues 993 to 1135 (HELLGRRTPD…GRIAVQLGAK (143 aa)) is N-terminal hotdog fold. The interval 993–1310 (HELLGRRTPD…GFEVRAVGEP (318 aa)) is dehydratase (DH) domain. The 321-residue stretch at 993 to 1313 (HELLGRRTPD…VRAVGEPDAS (321 aa)) folds into the PKS/mFAS DH domain. The Proton acceptor; for dehydratase activity role is filled by histidine 1025. The interval 1158 to 1313 (LQQLDCEKLY…VRAVGEPDAS (156 aa)) is C-terminal hotdog fold. Catalysis depends on aspartate 1217, which acts as the Proton donor; for dehydratase activity. Positions 1459-1652 (RLYTEDKGMH…FSGVDHIVHD (194 aa)) are methyltransferase (MT) domain. Positions 2209–2382 (TYLMVGAAGG…AASIIHVGHV (174 aa)) are ketoreductase (KR) domain. One can recognise a Carrier 1 domain in the interval 2502–2582 (EAAVAALKGF…QLSALAAKLA (81 aa)). Serine 2542 carries the O-(pantetheine 4'-phosphoryl)serine modification. Disordered regions lie at residues 2587 to 2629 (KKRA…EIAQ) and 2642 to 2712 (LEAS…FFTQ). Polar residues-rich tracts occupy residues 2648 to 2662 (GGSSTANLTTSSSVS) and 2670 to 2681 (ESTLQSSDNNGE). A compositionally biased stretch (low complexity) spans 2682-2698 (STPSKSSNCNSDSGSDN). Residues 2723 to 3169 (REAPMSPAQS…SAQSVGDCVV (447 aa)) form a condensation (C) domain region. The segment at 3203–3614 (CQQHSTKSAI…DGTLLCFGRI (412 aa)) is adenylation (A) (KR) domain. The interval 3728–3752 (EAAAATSPSNNNINNNTPSGGGGEK) is disordered. Residues 3729 to 3745 (AAAATSPSNNNINNNTP) show a composition bias toward low complexity. The Carrier 2 domain maps to 3751 to 3835 (EKMTVRQGEL…GMARCVAEQR (85 aa)). Serine 3795 is subject to O-(pantetheine 4'-phosphoryl)serine. The disordered stretch occupies residues 3862-3892 (EKLQHSSASSSSSSSSSSSAGSSSTQRPRKT). Residues 3867 to 3885 (SSASSSSSSSSSSSAGSSS) are compositionally biased toward low complexity. Positions 3899–4145 (LTGATGFLGG…LDFGQVDKVV (247 aa)) are reductase (RED) domain.

In the C-terminal section; belongs to the NRP synthetase family.

It functions in the pathway secondary metabolite biosynthesis. Hybrid PKS-NRPS synthetase; part of the gene cluster that mediates the biosynthesis of tenellin-type 2-pyridones, iron-chelating compounds involved in iron stress tolerance, competition with the natural competitor fungus Metarhizium robertsii and insect hosts infection. TenS catalyzes the assembly of the polyketide-amino acid backbone. Because tenS lacks a designated enoylreductase (ER) domain, the required activity is provided the enoyl reductase tenC. Upon formation of the polyketide backbone on the thiotemplate, the triketide is transferred to the NRPS module and linked to tyrosine to produce the pyrrolidine-2-dione intermediates, including pretellinin A, 11-hydropretellenin A, 12-hydropretellenin A, 13-hydropretellenin A, 14-hydropretellenin A, 12-oxopretellenin A and prototellinin D. The pathway begins with the assembly of the polyketide-amino acid backbone by the hybrid PKS-NRPS tenS with the help of the enoyl reductase tenC. These enzymes catalyze the synthesis of the pyrrolidine-2-dione intermediates pretellinin A, 11-hydropretellenin A, 12-hydropretellenin A, 13-hydropretellenin A, 14-hydropretellenin A, 12-oxopretellenin A and prototellinin D. The cytochrome P450 monooxygenase tenA then catalyzes an oxidative ring expansion of pretenellin A and 14-hydropretellenin A to form the 2-pyridone core, leading to pretenellin B and pyridovericin, respectively. The cytochrome P450 monooxygenase tenB is then required for the selective N-hydroxylation of the 2-pyridone nitrogen of yield tellinin and 15-hydroxytellenin (15-HT), respectively. The UDP-glucosyltransferase GT1 and the methyltransferase MT1, located outside the tenS gene cluster, contribute to the stepwise glycosylation and methylation of 15-HT to obtain the glycoside pyridovericin-N-O-(4-O-methyl-beta-D-glucopyranoside) (PMGP). Additional related compounds such as 1-O-methyl-15-HT, (8Z)-1-O-methyl-15-HT, and O-methyltenellin A are also produced but the enzymes involved in their biosynthesis have still to be determined. This chain is Tenellin synthetase, found in Beauveria bassiana (White muscardine disease fungus).